We begin with the raw amino-acid sequence, 290 residues long: Nucleoid occlusion protein (290 aa).

Positions 153–172 (EALAQRLGKGQSTIANKLRL) form a DNA-binding region, H-T-H motif.

This sequence belongs to the ParB family.

The protein resides in the cytoplasm. Its subcellular location is the nucleoid. Its function is as follows. Effects nucleoid occlusion by binding relatively nonspecifically to DNA and preventing the assembly of the division machinery in the vicinity of the nucleoid, especially under conditions that disturb the cell cycle. It helps to coordinate cell division and chromosome segregation by preventing the formation of the Z ring through the nucleoid, which would cause chromosome breakage. In Bacillus anthracis (strain A0248), this protein is Nucleoid occlusion protein.